Reading from the N-terminus, the 114-residue chain is Hydrogenase maturation factor HypA (114 aa).

His-2 contacts Ni(2+). Zn(2+) is bound by residues Cys-73, Cys-76, Cys-90, and Cys-93.

This sequence belongs to the HypA/HybF family.

Involved in the maturation of [NiFe] hydrogenases. Required for nickel insertion into the metal center of the hydrogenase. This chain is Hydrogenase maturation factor HypA, found in Klebsiella pneumoniae subsp. pneumoniae (strain ATCC 700721 / MGH 78578).